A 723-amino-acid polypeptide reads, in one-letter code: MFDTTPHSGRSSPSSSPSLRKRLQLLPPSRPPSAPEPEPGTMVEKGSDSSSEKSGVSGTLSTQSLGSRNFIRNSKKMQSWYSMLCPTYKQRNEDFRKLFSKLPEAERLIVDYSCALQREILLQGRLYLSENWICFYSNIFRWETTISIQLKEVTCLKKEKTAKLIPNAIQICTESEKHFFTSFGARDRCFLLIFRLWQNALLEKTLSPRELWHLVHQCYGSELGLTSEDEDYVCPLQLNGLGSPKEVGDVIALSDISPSGAADRSQEPSPVGSRCGRVTPNLSRASSDADHGAEEDKEDQTDSQLDASSSQTVTPVAEPLSAEPAPPDGPTSNLGPLDLLSREELLTDTSNSSSSTGEEGDLAALLPDLSGRLLINSVFHVGAERLQQMLFSDSPFLQGFLQQRKFTDVTLSPWSSDSKCHQRRVLTYTIPISNQLGPKSASVVETQTLFRRGPQAGGCVVDSEVLTQGIPYQDYFYTAHRYCILGLARNKARLRVSSEIRYRKQPWSLVKSLIEKSSWTGIEDYFHHLDRELAKAEKVSLEEGGKDARGLLSGLRRRKRPLSWRGHRDGPQHPDPDPCTQTSMHTSGSLSSRFSEPSVDQGPGAGIPSALVLISIVLIVLIALNALLFYRLWSLERTAHTFESWHSLALAKGKFPQTATEWAEILALQKHFHSVEVHKWRQILRASVELLDEMKFSLEKLHQGITVPDPPLDTQPHPDDSFP.

The segment covering 1–18 (MFDTTPHSGRSSPSSSPS) has biased composition (low complexity). Residues 1 to 63 (MFDTTPHSGR…SGVSGTLSTQ (63 aa)) form a disordered region. A compositionally biased stretch (pro residues) spans 28 to 38 (PSRPPSAPEPE). The region spanning 93–160 (EDFRKLFSKL…KEVTCLKKEK (68 aa)) is the GRAM domain. The tract at residues 257 to 337 (SPSGAADRSQ…DGPTSNLGPL (81 aa)) is disordered. Ser265, Ser269, and Ser273 each carry phosphoserine. Polar residues predominate over residues 302–314 (DSQLDASSSQTVT). In terms of domain architecture, VASt spans 370–541 (SGRLLINSVF…ELAKAEKVSL (172 aa)). Ser418 carries the post-translational modification Phosphoserine. A disordered region spans residues 562–601 (LSWRGHRDGPQHPDPDPCTQTSMHTSGSLSSRFSEPSVDQ). Residues 566 to 576 (GHRDGPQHPDP) show a composition bias toward basic and acidic residues. Polar residues predominate over residues 579 to 595 (CTQTSMHTSGSLSSRFS). Residues 610–630 (ALVLISIVLIVLIALNALLFY) traverse the membrane as a helical segment.

Its subcellular location is the endoplasmic reticulum membrane. The protein resides in the cell membrane. It is found in the cytoplasmic vesicle. The protein localises to the autophagosome. Functionally, cholesterol transporter that mediates non-vesicular transport of cholesterol from the plasma membrane (PM) to the endoplasmic reticulum (ER). Contains unique domains for binding cholesterol and the PM, thereby serving as a molecular bridge for the transfer of cholesterol from the PM to the ER. Plays a crucial role in cholesterol homeostasis and has the unique ability to localize to the PM based on the level of membrane cholesterol. In lipid-poor conditions localizes to the ER membrane and in response to excess cholesterol in the PM is recruited to the endoplasmic reticulum-plasma membrane contact sites (EPCS) which is mediated by the GRAM domain. At the EPCS, the sterol-binding VASt/ASTER domain binds to the cholesterol in the PM and facilitates its transfer from the PM to ER. May play a role in tumor progression. Plays a role in autophagy regulation and is required for biogenesis of the autophagosome. This function in autophagy requires its cholesterol-transfer activity. In Rattus norvegicus (Rat), this protein is Protein Aster-A.